A 406-amino-acid chain; its full sequence is RILP-like protein 1 (406 aa).

Ser7 carries the post-translational modification Phosphoserine. Residues 10–97 form the RH1 domain; it reads AALSALEKNV…RVERMDRIEK (88 aa). At Cys47 the chain carries S-nitrosocysteine. Positions 76 to 258 form a coiled coil; it reads ELDELRLELD…KLRERLQGEH (183 aa). 2 disordered regions span residues 255–280 and 330–354; these read QGEHSQNGEEEEAEIQPQPDGEESIS and EIEEENRIPQPPPITHPRTSPQPES. Ser259 bears the Phosphoserine mark. Residues 262–280 show a composition bias toward acidic residues; sequence GEEEEAEIQPQPDGEESIS. In terms of domain architecture, RH2 spans 294–359; sequence RPRFTLQELR…PQPESGIKRL (66 aa).

This sequence belongs to the RILPL family. Interacts (when S-nitrosylated) with GAPDH. Interacts with RAB8A; interaction is dependent on the phosphorylation of 'Thr-72' of RAB8A. Interacts with RAB10 and RAB12; the interaction is dependent on the phosphorylation of 'Thr-73' of RAB10, and 'Ser-105' of RAB12. S-nitrosylation is required for the interaction with GAPDH.

The protein resides in the cytoplasm. Its subcellular location is the cytosol. It is found in the cell projection. It localises to the cilium. The protein localises to the cytoskeleton. The protein resides in the microtubule organizing center. Its subcellular location is the centrosome. It is found in the centriole. Functionally, neuroprotective protein, which acts by sequestring GAPDH in the cytosol and prevent the apoptotic function of GAPDH in the nucleus. Competes with SIAH1 for binding GAPDH. Does not regulate lysosomal morphology and distribution. Plays a role in the regulation of cell shape and polarity. Plays a role in cellular protein transport, including protein transport away from primary cilia. Binds to RAB10 following LRRK2-mediated RAB10 phosphorylation which leads to inhibition of ciliogenesis. The protein is RILP-like protein 1 (Rilpl1) of Mus musculus (Mouse).